We begin with the raw amino-acid sequence, 289 residues long: MQKPEWLRVKAPQRERIGAVADLLLDLKLNTVCQEASCPNIGECFAGGTATFLIMGPGCTRACPYCDIDFDKSVRELDPTEPERLGEATQRLGLKHVVITSVNRDDLADGGASQFVACIEQIRRRSPGTTIELLVPDFCGDWDALAAVMAGAPDVLNHNIETVPRLYKKARPQAIYERSLELLQRVRQGWPRCYSKSGLMVGLGETDAEVIEVLADLRRHAVDIVTIGQYLSPGPKHLPVDRFVSPEQFEQFRSQGESELGFLQVVSTPLTRSSYHAGEVQRLMQEHPR.

7 residues coordinate [4Fe-4S] cluster: Cys-33, Cys-38, Cys-44, Cys-59, Cys-63, Cys-66, and Ser-274. Positions 45 to 263 (FAGGTATFLI…SQGESELGFL (219 aa)) constitute a Radical SAM core domain.

Belongs to the radical SAM superfamily. Lipoyl synthase family. The cofactor is [4Fe-4S] cluster.

It is found in the cytoplasm. It carries out the reaction [[Fe-S] cluster scaffold protein carrying a second [4Fe-4S](2+) cluster] + N(6)-octanoyl-L-lysyl-[protein] + 2 oxidized [2Fe-2S]-[ferredoxin] + 2 S-adenosyl-L-methionine + 4 H(+) = [[Fe-S] cluster scaffold protein] + N(6)-[(R)-dihydrolipoyl]-L-lysyl-[protein] + 4 Fe(3+) + 2 hydrogen sulfide + 2 5'-deoxyadenosine + 2 L-methionine + 2 reduced [2Fe-2S]-[ferredoxin]. The protein operates within protein modification; protein lipoylation via endogenous pathway; protein N(6)-(lipoyl)lysine from octanoyl-[acyl-carrier-protein]: step 2/2. Catalyzes the radical-mediated insertion of two sulfur atoms into the C-6 and C-8 positions of the octanoyl moiety bound to the lipoyl domains of lipoate-dependent enzymes, thereby converting the octanoylated domains into lipoylated derivatives. The chain is Lipoyl synthase from Synechococcus sp. (strain RCC307).